The following is a 259-amino-acid chain: Phosphatidylglycerol--prolipoprotein diacylglyceryl transferase (259 aa).

The next 4 membrane-spanning stretches (helical) occupy residues 12-32, 41-61, 80-100, and 109-129; these read LAIH…VYLA, ISSD…IVGA, IIAI…GALV, and VLNP…AQAI. Arg131 is a binding site for a 1,2-diacyl-sn-glycero-3-phospho-(1'-sn-glycerol). 3 consecutive transmembrane segments (helical) span residues 167–187, 194–214, and 226–246; these read IPTF…IMMW, LLDG…RLVI, and GIRI…IFVI.

The protein belongs to the Lgt family.

Its subcellular location is the cell membrane. It carries out the reaction L-cysteinyl-[prolipoprotein] + a 1,2-diacyl-sn-glycero-3-phospho-(1'-sn-glycerol) = an S-1,2-diacyl-sn-glyceryl-L-cysteinyl-[prolipoprotein] + sn-glycerol 1-phosphate + H(+). Its pathway is protein modification; lipoprotein biosynthesis (diacylglyceryl transfer). Functionally, catalyzes the transfer of the diacylglyceryl group from phosphatidylglycerol to the sulfhydryl group of the N-terminal cysteine of a prolipoprotein, the first step in the formation of mature lipoproteins. The sequence is that of Phosphatidylglycerol--prolipoprotein diacylglyceryl transferase from Streptococcus pyogenes serotype M3 (strain ATCC BAA-595 / MGAS315).